The primary structure comprises 3106 residues: Probable polyketide synthase 29 (3106 aa).

Residues 1–11 show a composition bias toward polar residues; sequence MVQNTDNTRNS. A disordered region spans residues 1-20; the sequence is MVQNTDNTRNSKLIRDRNDY. The 434-residue stretch at 28 to 461 folds into the Ketosynthase family 3 (KS3) domain; that stretch reads SGDIAVIGIG…GSNVCLILSE (434 aa). Residues C200, H339, and H384 each act as for beta-ketoacyl synthase activity in the active site. Positions 661–694 are acyl/malonyl transferase; sequence GVSADIIIGHSLGEVSSPYCSGMIDFQTLCYLTY. S671 acts as the For acyl/malonyl transferase activity in catalysis. The interval 961–1082 is N-terminal hotdog fold; that stretch reads PSIHGLGNNT…GNFSLTKHNS (122 aa). Residues 961–1266 enclose the PKS/mFAS DH domain; sequence PSIHGLGNNT…CALVSLDSNP (306 aa). Residue H994 is the Proton acceptor; for dehydratase activity of the active site. The C-terminal hotdog fold stretch occupies residues 1099-1266; sequence NFTSISKQDF…CALVSLDSNP (168 aa). D1171 serves as the catalytic Proton donor; for dehydratase activity. The Carrier domain maps to 2533 to 2610; sequence NNNEIIRSTI…QSIEIILSAH (78 aa). At S2570 the chain carries O-(pantetheine 4'-phosphoryl)serine. Positions 2609–2656 form a coiled coil; it reads AHNNNNKNNNNNNNINNNNKNNNNNNNKNNNNINNNINNNKNNNNNNN. Residues 2614-2656 are disordered; sequence NKNNNNNNNINNNNKNNNNNNNKNNNNINNNINNNKNNNNNNN.

It depends on pantetheine 4'-phosphate as a cofactor.

Functionally, probable polyketide synthase. This is Probable polyketide synthase 29 (pks29) from Dictyostelium discoideum (Social amoeba).